The primary structure comprises 395 residues: Methylthioribose-1-phosphate isomerase (395 aa).

Asp-258 serves as the catalytic Proton donor.

This sequence belongs to the eIF-2B alpha/beta/delta subunits family. MtnA subfamily.

Its subcellular location is the cytoplasm. The protein resides in the nucleus. It catalyses the reaction 5-(methylsulfanyl)-alpha-D-ribose 1-phosphate = 5-(methylsulfanyl)-D-ribulose 1-phosphate. It functions in the pathway amino-acid biosynthesis; L-methionine biosynthesis via salvage pathway; L-methionine from S-methyl-5-thio-alpha-D-ribose 1-phosphate: step 1/6. In terms of biological role, catalyzes the interconversion of methylthioribose-1-phosphate (MTR-1-P) into methylthioribulose-1-phosphate (MTRu-1-P). This chain is Methylthioribose-1-phosphate isomerase, found in Podospora anserina (strain S / ATCC MYA-4624 / DSM 980 / FGSC 10383) (Pleurage anserina).